The following is a 472-amino-acid chain: 7-dimethylallyltryptophan synthase hasE (472 aa).

Glu138 contributes to the L-tryptophan binding site. Dimethylallyl diphosphate contacts are provided by Arg154, Lys239, Tyr241, Lys313, Tyr315, Tyr393, Tyr460, and Tyr464.

It belongs to the tryptophan dimethylallyltransferase family. Homodimer.

It catalyses the reaction L-tryptophan + dimethylallyl diphosphate = 7-(3-methylbut-2-enyl)-L-tryptophan + diphosphate. It carries out the reaction an N-terminal L-tryptophanyl-L-alpha-aminoacyl-[peptide] + H2O = an N-terminal L-alpha-aminoacyl-[peptide] + L-tryptophan. It participates in secondary metabolite biosynthesis. Its function is as follows. 7-dimethylallyltryptophan synthase; part of the gene cluster that mediates the biosynthesis of hexadehydro-astechrome (HAS), a tryptophan-derived iron(III)-complex that acts as a virulence factor in infected mice. Catalyzes the prenylation of L-tryptophan at the C-7 position of the indole moiety. The enzyme is specific for dimethylallyl diphosphate (DMAPP) as prenyl donor. Also accepts D-tryptophan, typtophan-derivatives with modifications at the side chain or the indole ring, and linear and cyclic dipeptides such as H-L-Trp-L-Gly-OH or cyclo-L-Trp-L-Gly as substrates, however with lower efficiency. Also has tryptophan aminopeptidase activity towards linear peptides with a tryptophanyl moiety at the N-terminus. Dipeptides are better substrates than peptides with 3 or more amino acids. Enzymatic rate constants however are much higher for the prenyltransferase activity than for the aminopeptidase activity. Within the hexadehydro-astechrome biosyntetic pathway, hasE catalyzes the prenylation of the hasD-tethered tryptophan or the resulting tethered Trp-Ala dipeptid. The HAS biosynthesis begins with the synthesis of a tethered Trp-Ala dipeptide by the NRPS hasD. The 7-dimethylallyltryptophan synthase hasE then catalyzes the prenylation of the hasD-tethered tryptophan or the resulting tethered Trp-Ala dipeptide at the C-7 position of the indole moiety. HAS biosynthesis continues via tethered intermediates with the succesive actions of the cytochrome P450 monooxygenase hasH, the O-methyltransferase hasC, and the FAD-linked oxidoreductase hasG. The resulting O-methylated diketopiperazine is then released from hasD. Finally, three O-methylated diketopiperazine molecules assemble in a trimeric complex with Fe(III) to produce hexadehydro-astechrome. The chain is 7-dimethylallyltryptophan synthase hasE from Aspergillus fumigatus (strain CBS 144.89 / FGSC A1163 / CEA10) (Neosartorya fumigata).